Consider the following 273-residue polypeptide: Dermonecrotic toxin SdSicTox-betaIIB1bxiv (273 aa).

Histidine 4 is an active-site residue. Positions 24 and 26 each coordinate Mg(2+). The Nucleophile role is filled by histidine 40. 2 disulfide bridges follow: cysteine 44–cysteine 50 and cysteine 46–cysteine 189. Residue aspartate 84 coordinates Mg(2+).

The protein belongs to the arthropod phospholipase D family. Class II subfamily. Mg(2+) serves as cofactor. As to expression, expressed by the venom gland.

Its subcellular location is the secreted. It carries out the reaction an N-(acyl)-sphingosylphosphocholine = an N-(acyl)-sphingosyl-1,3-cyclic phosphate + choline. The enzyme catalyses an N-(acyl)-sphingosylphosphoethanolamine = an N-(acyl)-sphingosyl-1,3-cyclic phosphate + ethanolamine. The catalysed reaction is a 1-acyl-sn-glycero-3-phosphocholine = a 1-acyl-sn-glycero-2,3-cyclic phosphate + choline. It catalyses the reaction a 1-acyl-sn-glycero-3-phosphoethanolamine = a 1-acyl-sn-glycero-2,3-cyclic phosphate + ethanolamine. Dermonecrotic toxins cleave the phosphodiester linkage between the phosphate and headgroup of certain phospholipids (sphingolipid and lysolipid substrates), forming an alcohol (often choline) and a cyclic phosphate. This toxin acts on sphingomyelin (SM). It may also act on ceramide phosphoethanolamine (CPE), lysophosphatidylcholine (LPC) and lysophosphatidylethanolamine (LPE), but not on lysophosphatidylserine (LPS), and lysophosphatidylglycerol (LPG). It acts by transphosphatidylation, releasing exclusively cyclic phosphate products as second products. Induces dermonecrosis, hemolysis, increased vascular permeability, edema, inflammatory response, and platelet aggregation. This is Dermonecrotic toxin SdSicTox-betaIIB1bxiv from Sicarius cf. damarensis (strain GJB-2008) (Six-eyed sand spider).